Reading from the N-terminus, the 261-residue chain is Mannose-specific lectin 2 (261 aa).

An N-terminal signal peptide occupies residues 1 to 23 (MAKLLLFLLPAILGLLIPRSAVA). Bulb-type lectin domains follow at residues 26-131 (TNYL…PWVP) and 145-252 (DNLL…SKRS). Residues 51–55 (QNDCN), tyrosine 59, tryptophan 63, glutamine 64, 170–174 (QGDCN), tyrosine 178, and 182–185 (YGWQ) contribute to the beta-D-mannose site. The short motif at 51-59 (QNDCNLVLY) is the Carbohydrate-binding motif 1 element. 2 cysteine pairs are disulfide-bonded: cysteine 54/cysteine 74 and cysteine 173/cysteine 195. The short motif at 170–178 (QGDCNLVLY) is the Carbohydrate-binding motif 2 element.

In terms of assembly, forms heterotetramer of 2 chains 1 and 2 chains 2 arranged as a dimer of chain 1 and chain 2 heterodimers.

Its function is as follows. Mannose-specific lectin. Shows agglutinating activity towards erythrocytes from rabbit. This chain is Mannose-specific lectin 2, found in Colocasia esculenta (Wild taro).